Consider the following 147-residue polypeptide: MNRLEVTEKIISTKVTKGIKWEAVAKKVGLSKEWVTAACLGQMTLNAEQAKIVGKMFGLTVEEQKWLQVAPYKGSLPTLVPTDPLIYRWYEIVNVYGSTIKELIHEEFGDGIMSAIDFSMDIVRQPDPKGDRVNVVLSGKFLPYKQY.

Catalysis depends on residues Arg88, Glu91, and Ser114.

Belongs to the cyanase family.

The enzyme catalyses cyanate + hydrogencarbonate + 3 H(+) = NH4(+) + 2 CO2. Catalyzes the reaction of cyanate with bicarbonate to produce ammonia and carbon dioxide. The polypeptide is Cyanate hydratase (Albidiferax ferrireducens (strain ATCC BAA-621 / DSM 15236 / T118) (Rhodoferax ferrireducens)).